Consider the following 767-residue polypeptide: ATP-dependent rRNA helicase SPB4 (767 aa).

The Q motif motif lies at 28–56 (WTKLTPPLTPWVVSLLSDLGFGQMTPVQA). The region spanning 59–291 (IPLFVSHKDV…RIGLRNPVRV (233 aa)) is the Helicase ATP-binding domain. 72-79 (AVTGSGKT) serves as a coordination point for ATP. The disordered stretch occupies residues 132 to 176 (HVQAQQQQDQDEQDEQDEQEAQSDSDTDPDASTALNNKRKSSNHL). Residues 140-160 (DQDEQDEQDEQEAQSDSDTDP) are compositionally biased toward acidic residues. The DEAD box motif lies at 239–242 (DEAD). The region spanning 330–507 (QLARIVLFES…ILEPAEDDAS (178 aa)) is the Helicase C-terminal domain. The interval 609–767 (KLSGDQAKPP…NADAEPFFVI (159 aa)) is disordered. Basic and acidic residues-rich tracts occupy residues 636 to 645 (CDSHDSDDAH) and 659 to 681 (LERE…ANRE). The stretch at 654–746 (KNKRKLEREK…RANSDNDDAM (93 aa)) forms a coiled coil. Residues 690-700 (LKTQAAESSSN) are compositionally biased toward polar residues. The segment covering 701 to 746 (AKHEPPQDDHDEHDWNDDYRKLQKDKRQQRQRNKADRANSDNDDAM) has biased composition (basic and acidic residues). The span at 749-761 (NSDSDAAAANADA) shows a compositional bias: low complexity.

The protein belongs to the DEAD box helicase family. DDX55/SPB4 subfamily. As to quaternary structure, component of pre-60S ribosomal complexes.

The protein resides in the nucleus. It localises to the nucleolus. The enzyme catalyses ATP + H2O = ADP + phosphate + H(+). Its function is as follows. ATP-binding RNA helicase involved in the biogenesis of 60S ribosomal subunits. Binds 90S pre-ribosomal particles and dissociates from pre-60S ribosomal particles after processing of 27SB pre-rRNA. Required for the normal formation of 18S rRNA through the processing of pre-rRNAs at sites A0, A1 and A2, and the normal formation of 25S and 5.8S rRNAs through the processing of pre-rRNAs at sites C1 and C2. In Mycosarcoma maydis (Corn smut fungus), this protein is ATP-dependent rRNA helicase SPB4.